We begin with the raw amino-acid sequence, 250 residues long: Triosephosphate isomerase (250 aa).

9-11 (NWK) is a binding site for substrate. The active-site Electrophile is the His96. Residue Glu168 is the Proton acceptor of the active site. Substrate contacts are provided by residues Gly174, Ser216, and 237–238 (GG).

It belongs to the triosephosphate isomerase family. Homodimer.

Its subcellular location is the cytoplasm. The enzyme catalyses D-glyceraldehyde 3-phosphate = dihydroxyacetone phosphate. Its pathway is carbohydrate biosynthesis; gluconeogenesis. It functions in the pathway carbohydrate degradation; glycolysis; D-glyceraldehyde 3-phosphate from glycerone phosphate: step 1/1. Functionally, involved in the gluconeogenesis. Catalyzes stereospecifically the conversion of dihydroxyacetone phosphate (DHAP) to D-glyceraldehyde-3-phosphate (G3P). The protein is Triosephosphate isomerase of Leptospira interrogans serogroup Icterohaemorrhagiae serovar Lai (strain 56601).